The chain runs to 188 residues: uncharacterized protein (188 aa).

This is an uncharacterized protein from Autographa californica nuclear polyhedrosis virus (AcMNPV).